Reading from the N-terminus, the 197-residue chain is HTH-type transcriptional repressor BdcR (197 aa).

The region spanning 15 to 75 (RFAPEQAISA…RVLNEYVGTE (61 aa)) is the HTH tetR-type domain. The H-T-H motif DNA-binding region spans 38 to 57 (SVAEVTDYLGINPPSLYAAF).

Negatively regulates expression of bdcA. The protein is HTH-type transcriptional repressor BdcR (bdcR) of Escherichia coli (strain K12).